Here is a 336-residue protein sequence, read N- to C-terminus: Protein ABHD13 (336 aa).

The chain crosses the membrane as a helical; Signal-anchor for type II membrane protein span at residues 37-57; sequence FNMYGGVILLLLIFVSIAGIL. Catalysis depends on charge relay system residues Ser193, Asp268, and His298. N-linked (GlcNAc...) asparagine glycosylation is present at Asn299.

The protein belongs to the serine esterase family.

Its subcellular location is the membrane. This chain is Protein ABHD13, found in Xenopus laevis (African clawed frog).